The sequence spans 431 residues: Adenylosuccinate synthetase (431 aa).

GTP is bound by residues 12–18 (GDEGKGK) and 40–42 (GHT). D13 functions as the Proton acceptor in the catalytic mechanism. Residues D13 and G40 each coordinate Mg(2+). IMP is bound by residues 13 to 16 (DEGK), 38 to 41 (NAGH), T128, R142, Q223, T238, and R301. The active-site Proton donor is the H41. Position 297–303 (297–303 (TVTGRPR)) interacts with substrate. GTP-binding positions include R303, 329-331 (SID), and 411-413 (SVG).

This sequence belongs to the adenylosuccinate synthetase family. As to quaternary structure, homodimer. The cofactor is Mg(2+).

The protein resides in the cytoplasm. It catalyses the reaction IMP + L-aspartate + GTP = N(6)-(1,2-dicarboxyethyl)-AMP + GDP + phosphate + 2 H(+). It participates in purine metabolism; AMP biosynthesis via de novo pathway; AMP from IMP: step 1/2. Functionally, plays an important role in the de novo pathway of purine nucleotide biosynthesis. Catalyzes the first committed step in the biosynthesis of AMP from IMP. The sequence is that of Adenylosuccinate synthetase from Lacticaseibacillus casei (strain BL23) (Lactobacillus casei).